Consider the following 185-residue polypeptide: MERNNRNEGTHEEEQCSLSDIIYSFCSENHSELNPLQEIFGVTKNNDHEKHDEEPDEESYRMAKRQRSMEYRMMMEKKRRKEIKDKVDILQGLMPNHCTKPDLASKLENIIEYIKSLKYQVDVMSMAYTTTPVYTPPFYAAAQAPCMSPWGYYTPGVPMMPQQNMTYIPQYPQVYGTVPPNQTQP.

Residues 67-117 (RSMEYRMMMEKKRRKEIKDKVDILQGLMPNHCTKPDLASKLENIIEYIKSL) enclose the bHLH domain.

It belongs to the bHLH protein family. Homodimer.

It is found in the nucleus. In terms of biological role, transcription factor involved in somatic embryogenesis. Acts as a positive regulator of somatic embryo formation. Acts as a positive regulator of ECP63 by targeting its promoter and inducing its expression. This chain is Transcription factor bHLH109 (BHLH109), found in Arabidopsis thaliana (Mouse-ear cress).